The chain runs to 503 residues: Glutamate--tRNA ligase (503 aa).

The short motif at 15 to 25 (PSPTGHLHVGG) is the 'HIGH' region element. The 'KMSKS' region signature appears at 262 to 266 (KLSKR). Lys-265 is an ATP binding site.

Belongs to the class-I aminoacyl-tRNA synthetase family. Glutamate--tRNA ligase type 1 subfamily. In terms of assembly, monomer.

It localises to the cytoplasm. The catalysed reaction is tRNA(Glu) + L-glutamate + ATP = L-glutamyl-tRNA(Glu) + AMP + diphosphate. Catalyzes the attachment of glutamate to tRNA(Glu) in a two-step reaction: glutamate is first activated by ATP to form Glu-AMP and then transferred to the acceptor end of tRNA(Glu). The protein is Glutamate--tRNA ligase of Chlorobium phaeobacteroides (strain BS1).